The chain runs to 284 residues: NAD kinase (284 aa).

Asp-70 (proton acceptor) is an active-site residue. NAD(+) is bound by residues 70–71 (DG), 139–140 (NE), Lys-167, Asp-169, Leu-177, 180–185 (TAYNLS), and Gln-236.

Belongs to the NAD kinase family. Requires a divalent metal cation as cofactor.

Its subcellular location is the cytoplasm. It catalyses the reaction NAD(+) + ATP = ADP + NADP(+) + H(+). In terms of biological role, involved in the regulation of the intracellular balance of NAD and NADP, and is a key enzyme in the biosynthesis of NADP. Catalyzes specifically the phosphorylation on 2'-hydroxyl of the adenosine moiety of NAD to yield NADP. The sequence is that of NAD kinase from Helicobacter pylori (strain Shi470).